Reading from the N-terminus, the 98-residue chain is Integration host factor subunit alpha (98 aa).

Basic and acidic residues predominate over residues 53–69 (DLREKNERPGRNPKTGE). A disordered region spans residues 53–72 (DLREKNERPGRNPKTGEDIP).

The protein belongs to the bacterial histone-like protein family. In terms of assembly, heterodimer of an alpha and a beta chain.

Its function is as follows. This protein is one of the two subunits of integration host factor, a specific DNA-binding protein that functions in genetic recombination as well as in transcriptional and translational control. The sequence is that of Integration host factor subunit alpha from Vibrio atlanticus (strain LGP32) (Vibrio splendidus (strain Mel32)).